Consider the following 201-residue polypeptide: Methylated-DNA--protein-cysteine methyltransferase (201 aa).

Residues Tyr-131, Gly-132, and Arg-146 each contribute to the DNA site. Cys-163 acts as the Nucleophile; methyl group acceptor in catalysis.

It belongs to the MGMT family.

Its subcellular location is the nucleus. The catalysed reaction is a 6-O-methyl-2'-deoxyguanosine in DNA + L-cysteinyl-[protein] = S-methyl-L-cysteinyl-[protein] + a 2'-deoxyguanosine in DNA. The enzyme catalyses a 4-O-methyl-thymidine in DNA + L-cysteinyl-[protein] = a thymidine in DNA + S-methyl-L-cysteinyl-[protein]. Functionally, involved in the cellular defense against the biological effects of O6-methylguanine (O6-MeG) and O4-methylthymine (O4-MeT) in DNA. Repairs the methylated nucleobase in DNA by stoichiometrically transferring the methyl group to a cysteine residue in the enzyme. This is a suicide reaction: the enzyme is irreversibly inactivated. This Lodderomyces elongisporus (strain ATCC 11503 / CBS 2605 / JCM 1781 / NBRC 1676 / NRRL YB-4239) (Yeast) protein is Methylated-DNA--protein-cysteine methyltransferase (MGT1).